A 1164-amino-acid chain; its full sequence is Nuclear exosome regulator NRDE2 (1164 aa).

Disordered stretches follow at residues 1–25 and 39–149; these read MALF…ELDW and LSQQ…GHRF. At Ala-2 the chain carries N-acetylalanine. Residues 61–73 are compositionally biased toward basic and acidic residues; that stretch reads LKSESSDESDTNK. Positions 61 to 383 form a coiled coil; that stretch reads LKSESSDESD…IESNQSSVDL (323 aa). The span at 74–103 shows a compositional bias: basic residues; that stretch reads KLKQTSRKKKKEKKKKRKHQHHKKTKRKHG. Over residues 110–133 the composition is skewed to basic and acidic residues; the sequence is SETDTDSEKDKPSRGVGGSKKESE. Residues 163–266 form an MID/MTR4-interacting domain region; sequence FRTDKKPDPA…KDLEDAAPVT (104 aa). Residues 279 to 305 form a disordered region; sequence TTHWLQGQGPPEQESKQPDAQPDSESA. 5 HAT repeats span residues 305–337, 395–427, 758–792, 978–1010, and 1067–1101; these read AALK…FQDE, WEPS…FCQS, SQGK…LEWL, YPLA…IQNK, and GLMH…FLVS.

This sequence belongs to the NRDE2 family. As to quaternary structure, interacts with MTREX; the interaction is direct and stabilizes NRDE2. Interacts with EXOSC10, EFTUD2 and EIF4A3.

The protein resides in the nucleus speckle. The protein localises to the nucleus. It localises to the nucleolus. Its subcellular location is the nucleoplasm. Protein of the nuclear speckles that regulates RNA degradation and export from the nucleus through its interaction with MTREX an essential factor directing various RNAs to exosomal degradation. Changes the conformation of MTREX, precluding its association with the nuclear exosome and interaction with proteins required for its function in RNA exosomal degradation. Negatively regulates, for instance, the degradation of mRNAs and lncRNAs by inhibiting their MTREX-mediated recruitment to nuclear exosome. By preventing the degradation of RNAs in the nucleus, it promotes their export to the cytoplasm. U5 snRNP-associated RNA splicing factor which is required for efficient splicing of CEP131 pre-mRNA and plays an important role in centrosome maturation, integrity and function during mitosis. Suppresses intron retention in a subset of pre-mRNAs containing short, GC-rich introns with relatively weak 5' and 3' splice sites. Plays a role in DNA damage response. This Homo sapiens (Human) protein is Nuclear exosome regulator NRDE2.